The following is a 317-amino-acid chain: MTTALDQLKQYTTVVADTGDFQQLAQYKPQDATTNPSLILKAVQKDAYRPILEKTVRDHAGESVGFIIDRLLIAFGTEILKLIPGRVSTEVDARLSFDTQRSIDKGREIIKLYEAAGVGRERVLIKLASTWEGIRAAEVLQREGIRCNMTLLFSLVQAAACAEAGAQLISPFVGRIYDWYKKQKGADWDEAQDGGANDPGVQSVRRIYTYYKHFGYRTEVMGASFRTTSQITELAGCDLLTISPELLQKLHDSTEAVARKLSPDEARDARLERVAIDESSFRFQLNDDAMATEKLAEGIRLFSADAVKLEKMIEALR.

Lys126 functions as the Schiff-base intermediate with substrate in the catalytic mechanism.

The protein belongs to the transaldolase family. Type 1 subfamily. As to quaternary structure, homodimer.

The protein resides in the cytoplasm. It catalyses the reaction D-sedoheptulose 7-phosphate + D-glyceraldehyde 3-phosphate = D-erythrose 4-phosphate + beta-D-fructose 6-phosphate. Its pathway is carbohydrate degradation; pentose phosphate pathway; D-glyceraldehyde 3-phosphate and beta-D-fructose 6-phosphate from D-ribose 5-phosphate and D-xylulose 5-phosphate (non-oxidative stage): step 2/3. Transaldolase is important for the balance of metabolites in the pentose-phosphate pathway. This chain is Transaldolase, found in Burkholderia pseudomallei (strain K96243).